A 302-amino-acid polypeptide reads, in one-letter code: Urease accessory protein UreD 2 (302 aa).

Belongs to the UreD family. As to quaternary structure, ureD, UreF and UreG form a complex that acts as a GTP-hydrolysis-dependent molecular chaperone, activating the urease apoprotein by helping to assemble the nickel containing metallocenter of UreC. The UreE protein probably delivers the nickel.

The protein localises to the cytoplasm. Its function is as follows. Required for maturation of urease via the functional incorporation of the urease nickel metallocenter. This Brucella ovis (strain ATCC 25840 / 63/290 / NCTC 10512) protein is Urease accessory protein UreD 2.